The chain runs to 286 residues: tRNA (guanine-N(7)-)-methyltransferase (286 aa).

Phosphoserine occurs at positions 7 and 59. S-adenosyl-L-methionine is bound by residues Gly103, 126–127 (EI), 161–162 (NA), and Cys181. Residue Asp184 is part of the active site. S-adenosyl-L-methionine is bound at residue 259–261 (TEE).

Belongs to the class I-like SAM-binding methyltransferase superfamily. TrmB family. In terms of assembly, forms a complex with TRM82.

The protein localises to the nucleus. The enzyme catalyses guanosine(46) in tRNA + S-adenosyl-L-methionine = N(7)-methylguanosine(46) in tRNA + S-adenosyl-L-homocysteine. It functions in the pathway tRNA modification; N(7)-methylguanine-tRNA biosynthesis. Functionally, methyltransferase that catalyzes the formation of N(7)-methylguanine at position 46 (m7G46) in tRNA, a modification required to maintain stability of tRNAs; its absence resulting in tRNA decay. Both the D-stem and T-stem structures of tRNAs are required for efficient methyltransferase activity. This Saccharomyces cerevisiae (strain RM11-1a) (Baker's yeast) protein is tRNA (guanine-N(7)-)-methyltransferase.